The primary structure comprises 285 residues: S-methyl-5'-thioadenosine phosphorylase (285 aa).

Phosphate contacts are provided by residues S10, 52–53, and 85–86; these read RH and TA. M188 contacts substrate. T189 serves as a coordination point for phosphate. A substrate-binding site is contributed by 212 to 214; that stretch reads DYD.

It belongs to the PNP/MTAP phosphorylase family. MTAP subfamily. Homotrimer.

Its subcellular location is the cytoplasm. It localises to the nucleus. It carries out the reaction S-methyl-5'-thioadenosine + phosphate = 5-(methylsulfanyl)-alpha-D-ribose 1-phosphate + adenine. Its pathway is amino-acid biosynthesis; L-methionine biosynthesis via salvage pathway; S-methyl-5-thio-alpha-D-ribose 1-phosphate from S-methyl-5'-thioadenosine (phosphorylase route): step 1/1. In terms of biological role, catalyzes the reversible phosphorylation of S-methyl-5'-thioadenosine (MTA) to adenine and 5-methylthioribose-1-phosphate. Involved in the breakdown of MTA, a major by-product of polyamine biosynthesis. Responsible for the first step in the methionine salvage pathway after MTA has been generated from S-adenosylmethionine. Has broad substrate specificity with 6-aminopurine nucleosides as preferred substrates. The polypeptide is S-methyl-5'-thioadenosine phosphorylase (Caenorhabditis briggsae).